Consider the following 195-residue polypeptide: Imidazoleglycerol-phosphate dehydratase (195 aa).

Belongs to the imidazoleglycerol-phosphate dehydratase family.

The protein localises to the cytoplasm. The catalysed reaction is D-erythro-1-(imidazol-4-yl)glycerol 3-phosphate = 3-(imidazol-4-yl)-2-oxopropyl phosphate + H2O. Its pathway is amino-acid biosynthesis; L-histidine biosynthesis; L-histidine from 5-phospho-alpha-D-ribose 1-diphosphate: step 6/9. This Hydrogenovibrio crunogenus (strain DSM 25203 / XCL-2) (Thiomicrospira crunogena) protein is Imidazoleglycerol-phosphate dehydratase.